The chain runs to 23 residues: Caerin-4.3 (23 aa).

Expressed by the skin parotoid and/or rostral glands.

The protein resides in the secreted. Functionally, antibacterial peptide, that adopts an alpha helical conformation which can disrupt bacterial membranes. Each caerin displays a different antimicrobial specificity. In Ranoidea caerulea (Green tree frog), this protein is Caerin-4.3.